The chain runs to 159 residues: Endoribonuclease YbeY (159 aa).

Zn(2+)-binding residues include His114, His118, and His124.

This sequence belongs to the endoribonuclease YbeY family. It depends on Zn(2+) as a cofactor.

The protein localises to the cytoplasm. Single strand-specific metallo-endoribonuclease involved in late-stage 70S ribosome quality control and in maturation of the 3' terminus of the 16S rRNA. This chain is Endoribonuclease YbeY, found in Pectobacterium atrosepticum (strain SCRI 1043 / ATCC BAA-672) (Erwinia carotovora subsp. atroseptica).